Consider the following 169-residue polypeptide: Large ribosomal subunit protein uL10 (169 aa).

The protein belongs to the universal ribosomal protein uL10 family. Part of the ribosomal stalk of the 50S ribosomal subunit. The N-terminus interacts with L11 and the large rRNA to form the base of the stalk. The C-terminus forms an elongated spine to which L12 dimers bind in a sequential fashion forming a multimeric L10(L12)X complex.

Forms part of the ribosomal stalk, playing a central role in the interaction of the ribosome with GTP-bound translation factors. In Rickettsia typhi (strain ATCC VR-144 / Wilmington), this protein is Large ribosomal subunit protein uL10.